The chain runs to 361 residues: Phospho-N-acetylmuramoyl-pentapeptide-transferase (361 aa).

10 helical membrane-spanning segments follow: residues 28–48 (LAVLVTLSLSFLIGPRLIKFL), 74–94 (TMGGIMIILSSCFSTLLLADL), 99–119 (IWITLFGFVSFGIIGFLDDYA), 135–155 (LLLQGIISLIVCILLEYTIDS), 167–187 (SLSMDLGYLYIFFAIFVIVGA), 203–223 (VPIALTAGSFALISYLVGNLI), 236–256 (TGELTIFCASIVGSCLGFLWF), 263–283 (VFMGDTGSLSLGGVLGIISVI), 288–308 (IVLGIVGGLFVIETISVIMQV), and 338–358 (KVVIRFWIISLIFVLIGLSSL).

Belongs to the glycosyltransferase 4 family. MraY subfamily. The cofactor is Mg(2+).

The protein resides in the cell inner membrane. It catalyses the reaction UDP-N-acetyl-alpha-D-muramoyl-L-alanyl-gamma-D-glutamyl-meso-2,6-diaminopimeloyl-D-alanyl-D-alanine + di-trans,octa-cis-undecaprenyl phosphate = di-trans,octa-cis-undecaprenyl diphospho-N-acetyl-alpha-D-muramoyl-L-alanyl-D-glutamyl-meso-2,6-diaminopimeloyl-D-alanyl-D-alanine + UMP. It functions in the pathway cell wall biogenesis; peptidoglycan biosynthesis. Its function is as follows. Catalyzes the initial step of the lipid cycle reactions in the biosynthesis of the cell wall peptidoglycan: transfers peptidoglycan precursor phospho-MurNAc-pentapeptide from UDP-MurNAc-pentapeptide onto the lipid carrier undecaprenyl phosphate, yielding undecaprenyl-pyrophosphoryl-MurNAc-pentapeptide, known as lipid I. This chain is Phospho-N-acetylmuramoyl-pentapeptide-transferase, found in Rickettsia bellii (strain RML369-C).